A 1031-amino-acid polypeptide reads, in one-letter code: Ookinete maturation protein 1 (1031 aa).

Disordered regions lie at residues 125-184, 340-405, and 609-697; these read HNEN…PELE, KEAE…DGMR, and DAEL…NDSI. Residues 141 to 168 show a composition bias toward basic residues; it reads QKLKKKKKIKKGTKKKSINKISILKHKS. A compositionally biased stretch (polar residues) spans 171 to 180; it reads SFPSTQNENT. Over residues 340–357 the composition is skewed to basic and acidic residues; sequence KEAEEEERKKNEDEHILE. Residues 377-394 are compositionally biased toward polar residues; it reads LGKSFKNNESFELNSPQK. Positions 581–646 form a coiled coil; it reads IDEENSVFVE…ETQMAGKEEK (66 aa). Over residues 610–648 the composition is skewed to basic and acidic residues; that stretch reads AELRKDEEEDKSKNNEKDSKSEERDILETQMAGKEEKPV. A compositionally biased stretch (basic residues) spans 649–659; the sequence is LKKKKKNKGKQ. The segment covering 660–686 has biased composition (basic and acidic residues); the sequence is RNREGKGVVEKGYDAKREKKENEEKNK.

Its function is as follows. In the mosquito vector midgut, plays a role in ookinete development. The chain is Ookinete maturation protein 1 from Plasmodium berghei (strain Anka).